A 270-amino-acid polypeptide reads, in one-letter code: tRNA (guanine-N(1)-)-methyltransferase (270 aa).

S-adenosyl-L-methionine contacts are provided by residues Gly-119 and 139 to 144 (IGDYVI).

It belongs to the RNA methyltransferase TrmD family. Homodimer.

It is found in the cytoplasm. The catalysed reaction is guanosine(37) in tRNA + S-adenosyl-L-methionine = N(1)-methylguanosine(37) in tRNA + S-adenosyl-L-homocysteine + H(+). In terms of biological role, specifically methylates guanosine-37 in various tRNAs. This Nitrosomonas europaea (strain ATCC 19718 / CIP 103999 / KCTC 2705 / NBRC 14298) protein is tRNA (guanine-N(1)-)-methyltransferase.